We begin with the raw amino-acid sequence, 127 residues long: Fluoride-specific ion channel FluC (127 aa).

A run of 4 helical transmembrane segments spans residues 1 to 21 (MMSY…RHMV), 32 to 52 (EFPF…GAVV), 71 to 91 (TGIL…VLLY), and 96 to 116 (VFLA…ALLL). Residues Gly-75 and Thr-78 each coordinate Na(+).

The protein belongs to the fluoride channel Fluc/FEX (TC 1.A.43) family.

Its subcellular location is the cell inner membrane. The enzyme catalyses fluoride(in) = fluoride(out). With respect to regulation, na(+) is not transported, but it plays an essential structural role and its presence is essential for fluoride channel function. Its function is as follows. Fluoride-specific ion channel. Important for reducing fluoride concentration in the cell, thus reducing its toxicity. This Granulibacter bethesdensis (strain ATCC BAA-1260 / CGDNIH1) protein is Fluoride-specific ion channel FluC.